Reading from the N-terminus, the 311-residue chain is Olfactory receptor 2M4 (311 aa).

Topologically, residues 1–25 (MVWENQTFNSIFILLGIFNHSPTHT) are extracellular. A glycan (N-linked (GlcNAc...) asparagine) is linked at N5. The helical transmembrane segment at 26 to 49 (FLFSLVLGIFSLALMENISMVLLI) threads the bilayer. At 50 to 57 (YIEKQLHT) the chain is on the cytoplasmic side. Residues 58–79 (PMYFLLSQLSLMDLMLICTTLP) traverse the membrane as a helical segment. Residues 80–100 (KMIFSYLSGKKSISLAGCGTQ) lie on the Extracellular side of the membrane. C97 and C189 form a disulfide bridge. Residues 101–120 (IFFYVSLLGAECFLLAVMAY) form a helical membrane-spanning segment. Residues 121 to 139 (DRYVAICHPLQYTILMNPK) are Cytoplasmic-facing. The helical transmembrane segment at 140–158 (LCVFMTVASWTLGSLDGII) threads the bilayer. Residues 159–195 (VLAAVLSFSYCSSLEIHHFFCDVAALLPLSCTETSAF) lie on the Extracellular side of the membrane. The chain crosses the membrane as a helical span at residues 196–219 (ERLLVICCVVMLIFPVSVIILSYS). The Cytoplasmic portion of the chain corresponds to 220 to 236 (HVLRAVIHMGSGESRRK). Residues 237–259 (AFTTCSSHLSVVGLYYGAAMFMY) traverse the membrane as a helical segment. At 260-272 (MRPASKHTPDQDK) the chain is on the extracellular side. The helical transmembrane segment at 273 to 292 (MVSAFYTILTPMLNPLIYSL) threads the bilayer. The Cytoplasmic segment spans residues 293–311 (RNKEVFRALQKVLKKRKLI).

It belongs to the G-protein coupled receptor 1 family.

The protein resides in the cell membrane. Its function is as follows. Odorant receptor. In Homo sapiens (Human), this protein is Olfactory receptor 2M4 (OR2M4).